The following is a 754-amino-acid chain: Protein neuralized (754 aa).

An NHR 1 domain is found at 106–260 (PLQFHSVHGD…NCTGIEFLDS (155 aa)). Positions 280–297 (QQQQMPQPAANASSALNS) are enriched in low complexity. Positions 280 to 308 (QQQQMPQPAANASSALNSHHPHQQSRRSL) are disordered. Phosphoserine occurs at positions 338 and 341. The NHR 2 domain maps to 368–523 (PVPFHNTKGR…STQSLRMFRQ (156 aa)). Residues 701-742 (CTICYENPIDSVLYMCGHMCMCYDCAIEQWRGVGGGQCPLCR) form an RING-type zinc finger.

It is found in the nucleus. Functionally, involved in neurogenesis. Interacts with other neurogenic proteins in the specification of the neuroblast versus epidermoblast cell fate. In Drosophila melanogaster (Fruit fly), this protein is Protein neuralized (neur).